Reading from the N-terminus, the 488-residue chain is Ribulose bisphosphate carboxylase large chain (488 aa).

Residues N127 and T177 each coordinate substrate. K179 serves as the catalytic Proton acceptor. A substrate-binding site is contributed by K181. Residues K205, D207, and E208 each contribute to the Mg(2+) site. K205 carries the N6-carboxylysine modification. Residue H297 is the Proton acceptor of the active site. 3 residues coordinate substrate: R298, H330, and S382.

This sequence belongs to the RuBisCO large chain family. Type I subfamily. In terms of assembly, heterohexadecamer of 8 large chains and 8 small chains. Mg(2+) is required as a cofactor.

The protein localises to the plastid. The protein resides in the chloroplast. The catalysed reaction is 2 (2R)-3-phosphoglycerate + 2 H(+) = D-ribulose 1,5-bisphosphate + CO2 + H2O. The enzyme catalyses D-ribulose 1,5-bisphosphate + O2 = 2-phosphoglycolate + (2R)-3-phosphoglycerate + 2 H(+). RuBisCO catalyzes two reactions: the carboxylation of D-ribulose 1,5-bisphosphate, the primary event in carbon dioxide fixation, as well as the oxidative fragmentation of the pentose substrate in the photorespiration process. Both reactions occur simultaneously and in competition at the same active site. This chain is Ribulose bisphosphate carboxylase large chain, found in Porphyra purpurea (Red seaweed).